Reading from the N-terminus, the 128-residue chain is Histone H2A type 1-H (128 aa).

Residues 1 to 22 are disordered; the sequence is MSGRGKQGGKARAKAKTRSSRA. N-acetylserine is present on Ser-2. A Phosphoserine; by RPS6KA5 modification is found at Ser-2. A Citrulline; alternate modification is found at Arg-4. Symmetric dimethylarginine; by PRMT5; alternate is present on Arg-4. Residues Lys-6 and Lys-10 each carry the N6-(2-hydroxyisobutyryl)lysine; alternate modification. An N6-(beta-hydroxybutyryl)lysine; alternate modification is found at Lys-6. The span at 7–19 shows a compositional bias: basic residues; that stretch reads QGGKARAKAKTRS. The residue at position 10 (Lys-10) is an N6-lactoyllysine; alternate. Residue Lys-10 is modified to N6-succinyllysine; alternate. Residues Lys-14 and Lys-16 each participate in a glycyl lysine isopeptide (Lys-Gly) (interchain with G-Cter in ubiquitin) cross-link. Position 37 is an N6-(2-hydroxyisobutyryl)lysine; alternate (Lys-37). An N6-(beta-hydroxybutyryl)lysine; alternate modification is found at Lys-37. Lys-37 bears the N6-crotonyllysine; alternate mark. Residues Lys-75 and Lys-76 each carry the N6-(2-hydroxyisobutyryl)lysine modification. Lys-96 carries the N6-(2-hydroxyisobutyryl)lysine; alternate modification. N6-succinyllysine; alternate is present on Lys-96. At Lys-96 the chain carries N6-glutaryllysine; alternate. Position 105 is an N5-methylglutamine (Gln-105). An N6-(2-hydroxyisobutyryl)lysine; alternate modification is found at Lys-119. Residues Lys-119 and Lys-120 each carry the N6-crotonyllysine; alternate modification. 2 positions are modified to N6-glutaryllysine; alternate: Lys-119 and Lys-120. Lys-120 bears the N6-(beta-hydroxybutyryl)lysine; alternate mark. Lys-120 participates in a covalent cross-link: Glycyl lysine isopeptide (Lys-Gly) (interchain with G-Cter in ubiquitin); alternate. Thr-121 is subject to Phosphothreonine; by DCAF1. Lys-126 is modified (N6-(beta-hydroxybutyryl)lysine; alternate). Lys-126 carries the post-translational modification N6-crotonyllysine; alternate. At Lys-126 the chain carries N6-glutaryllysine; alternate.

Belongs to the histone H2A family. The nucleosome is a histone octamer containing two molecules each of H2A, H2B, H3 and H4 assembled in one H3-H4 heterotetramer and two H2A-H2B heterodimers. The octamer wraps approximately 147 bp of DNA. In terms of processing, deiminated on Arg-4 in granulocytes upon calcium entry. Monoubiquitination of Lys-120 (H2AK119Ub) by RING1, TRIM37 and RNF2/RING2 complex gives a specific tag for epigenetic transcriptional repression and participates in X chromosome inactivation of female mammals. It is involved in the initiation of both imprinted and random X inactivation. Ubiquitinated H2A is enriched in inactive X chromosome chromatin. Ubiquitination of H2A functions downstream of methylation of 'Lys-27' of histone H3 (H3K27me). H2AK119Ub by RNF2/RING2 can also be induced by ultraviolet and may be involved in DNA repair. Following DNA double-strand breaks (DSBs), it is ubiquitinated through 'Lys-63' linkage of ubiquitin moieties by the E2 ligase UBE2N and the E3 ligases RNF8 and RNF168, leading to the recruitment of repair proteins to sites of DNA damage. Ubiquitination at Lys-14 and Lys-16 (H2AK13Ub and H2AK15Ub, respectively) in response to DNA damage is initiated by RNF168 that mediates monoubiquitination at these 2 sites, and 'Lys-63'-linked ubiquitin are then conjugated to monoubiquitin; RNF8 is able to extend 'Lys-63'-linked ubiquitin chains in vitro. H2AK119Ub and ionizing radiation-induced 'Lys-63'-linked ubiquitination (H2AK13Ub and H2AK15Ub) are distinct events. Post-translationally, phosphorylation on Ser-2 (H2AS1ph) is enhanced during mitosis. Phosphorylation on Ser-2 by RPS6KA5/MSK1 directly represses transcription. Acetylation of H3 inhibits Ser-2 phosphorylation by RPS6KA5/MSK1. Phosphorylation at Thr-121 (H2AT120ph) by DCAF1 is present in the regulatory region of many tumor suppresor genes and down-regulates their transcription. In terms of processing, symmetric dimethylation on Arg-4 by the PRDM1/PRMT5 complex may play a crucial role in the germ-cell lineage. Glutamine methylation at Gln-105 (H2AQ104me) by FBL is specifically dedicated to polymerase I. It is present at 35S ribosomal DNA locus and impairs binding of the FACT complex. Post-translationally, crotonylation (Kcr) is specifically present in male germ cells and marks testis-specific genes in post-meiotic cells, including X-linked genes that escape sex chromosome inactivation in haploid cells. Crotonylation marks active promoters and enhancers and confers resistance to transcriptional repressors. It is also associated with post-meiotically activated genes on autosomes. In terms of processing, hydroxybutyrylation of histones is induced by starvation. Lactylated in macrophages by EP300/P300 by using lactoyl-CoA directly derived from endogenous or exogenous lactate, leading to stimulates gene transcription.

Its subcellular location is the nucleus. It is found in the chromosome. In terms of biological role, core component of nucleosome. Nucleosomes wrap and compact DNA into chromatin, limiting DNA accessibility to the cellular machineries which require DNA as a template. Histones thereby play a central role in transcription regulation, DNA repair, DNA replication and chromosomal stability. DNA accessibility is regulated via a complex set of post-translational modifications of histones, also called histone code, and nucleosome remodeling. This Mus musculus (Mouse) protein is Histone H2A type 1-H.